The sequence spans 522 residues: Light-independent protochlorophyllide reductase subunit B (522 aa).

A [4Fe-4S] cluster-binding site is contributed by Asp36. Residue Asp274 is the Proton donor of the active site. Gly409–Leu410 contributes to the substrate binding site. The disordered stretch occupies residues Asp426 to Ala464. Residues Pro455–Ala464 are compositionally biased toward low complexity.

It belongs to the ChlB/BchB/BchZ family. As to quaternary structure, protochlorophyllide reductase is composed of three subunits; BchL, BchN and BchB. Forms a heterotetramer of two BchB and two BchN subunits. [4Fe-4S] cluster serves as cofactor.

The enzyme catalyses chlorophyllide a + oxidized 2[4Fe-4S]-[ferredoxin] + 2 ADP + 2 phosphate = protochlorophyllide a + reduced 2[4Fe-4S]-[ferredoxin] + 2 ATP + 2 H2O. It functions in the pathway porphyrin-containing compound metabolism; bacteriochlorophyll biosynthesis (light-independent). Component of the dark-operative protochlorophyllide reductase (DPOR) that uses Mg-ATP and reduced ferredoxin to reduce ring D of protochlorophyllide (Pchlide) to form chlorophyllide a (Chlide). This reaction is light-independent. The NB-protein (BchN-BchB) is the catalytic component of the complex. In Cereibacter sphaeroides (strain ATCC 17025 / ATH 2.4.3) (Rhodobacter sphaeroides), this protein is Light-independent protochlorophyllide reductase subunit B.